The sequence spans 325 residues: Delta(1)-pyrroline-2-carboxylate reductase (325 aa).

Belongs to the ornithine cyclodeaminase/mu-crystallin family.

The enzyme catalyses L-proline + NAD(+) = 1-pyrroline-2-carboxylate + NADH + H(+). It carries out the reaction L-proline + NADP(+) = 1-pyrroline-2-carboxylate + NADPH + H(+). Functionally, catalyzes the reduction of Delta(1)-pyrroline-2-carboxylate (Pyr2C) to L-proline, using preferentially NADPH over NADH as the electron donor. Is likely involved in a degradation pathway that converts trans-3-hydroxy-L-proline (t3LHyp) to L-proline. This Bacillus cereus (strain ATCC 10987 / NRS 248) protein is Delta(1)-pyrroline-2-carboxylate reductase.